A 151-amino-acid chain; its full sequence is Tetratricopeptide repeat protein 32 (151 aa).

3 TPR repeats span residues 8 to 41 (SHAT…CACA), 58 to 91 (ATAY…QPNF), and 92 to 125 (EVPY…NPGF).

The protein is Tetratricopeptide repeat protein 32 (TTC32) of Homo sapiens (Human).